The primary structure comprises 97 residues: Large ribosomal subunit protein uL23 (97 aa).

It belongs to the universal ribosomal protein uL23 family. In terms of assembly, part of the 50S ribosomal subunit. Contacts protein L29, and trigger factor when it is bound to the ribosome.

One of the early assembly proteins it binds 23S rRNA. One of the proteins that surrounds the polypeptide exit tunnel on the outside of the ribosome. Forms the main docking site for trigger factor binding to the ribosome. The sequence is that of Large ribosomal subunit protein uL23 from Rhizobium etli (strain CIAT 652).